We begin with the raw amino-acid sequence, 359 residues long: Pyruvate dehydrogenase E1 component subunit beta, mitochondrial (359 aa).

The N-terminal 30 residues, 1-30 (MAAVAGLVRGPLRQASGLLKRRFHRSAPAA), are a transit peptide targeting the mitochondrion. Residue Y67 is modified to Phosphotyrosine. E89 is a thiamine diphosphate binding site. 5 residues coordinate K(+): I142, A190, I191, D193, and N195. Residue K354 is modified to N6-acetyllysine.

In terms of assembly, heterotetramer of two PDHA1 and two PDHB subunits. The heterotetramer interacts with DLAT, and is part of the multimeric pyruvate dehydrogenase complex that contains multiple copies of pyruvate dehydrogenase (E1), dihydrolipoamide acetyltransferase (DLAT, E2) and lipoamide dehydrogenase (DLD, E3). These subunits are bound to an inner core composed of about 48 DLAT and 12 PDHX molecules. Interacts with DLAT. Thiamine diphosphate is required as a cofactor.

It is found in the mitochondrion matrix. It catalyses the reaction N(6)-[(R)-lipoyl]-L-lysyl-[protein] + pyruvate + H(+) = N(6)-[(R)-S(8)-acetyldihydrolipoyl]-L-lysyl-[protein] + CO2. In terms of biological role, the pyruvate dehydrogenase complex catalyzes the overall conversion of pyruvate to acetyl-CoA and CO(2), and thereby links the glycolytic pathway to the tricarboxylic cycle. In Rattus norvegicus (Rat), this protein is Pyruvate dehydrogenase E1 component subunit beta, mitochondrial (Pdhb).